A 422-amino-acid chain; its full sequence is UDP-N-acetylglucosamine 1-carboxyvinyltransferase (422 aa).

Position 22–23 (22–23 (KN)) interacts with phosphoenolpyruvate. A UDP-N-acetyl-alpha-D-glucosamine-binding site is contributed by arginine 94. Cysteine 118 acts as the Proton donor in catalysis. Cysteine 118 carries the 2-(S-cysteinyl)pyruvic acid O-phosphothioketal modification. Residues 123–127 (RPVDL), aspartate 309, and isoleucine 331 contribute to the UDP-N-acetyl-alpha-D-glucosamine site.

Belongs to the EPSP synthase family. MurA subfamily.

It is found in the cytoplasm. The enzyme catalyses phosphoenolpyruvate + UDP-N-acetyl-alpha-D-glucosamine = UDP-N-acetyl-3-O-(1-carboxyvinyl)-alpha-D-glucosamine + phosphate. It participates in cell wall biogenesis; peptidoglycan biosynthesis. Its function is as follows. Cell wall formation. Adds enolpyruvyl to UDP-N-acetylglucosamine. This is UDP-N-acetylglucosamine 1-carboxyvinyltransferase from Cereibacter sphaeroides (strain ATCC 17029 / ATH 2.4.9) (Rhodobacter sphaeroides).